We begin with the raw amino-acid sequence, 286 residues long: Ribosomal RNA small subunit methyltransferase A (286 aa).

S-adenosyl-L-methionine contacts are provided by N33, V35, G60, E81, D111, and N129.

This sequence belongs to the class I-like SAM-binding methyltransferase superfamily. rRNA adenine N(6)-methyltransferase family. RsmA subfamily.

The protein resides in the cytoplasm. The enzyme catalyses adenosine(1518)/adenosine(1519) in 16S rRNA + 4 S-adenosyl-L-methionine = N(6)-dimethyladenosine(1518)/N(6)-dimethyladenosine(1519) in 16S rRNA + 4 S-adenosyl-L-homocysteine + 4 H(+). In terms of biological role, specifically dimethylates two adjacent adenosines (A1518 and A1519) in the loop of a conserved hairpin near the 3'-end of 16S rRNA in the 30S particle. May play a critical role in biogenesis of 30S subunits. This chain is Ribosomal RNA small subunit methyltransferase A, found in Streptomyces coelicolor (strain ATCC BAA-471 / A3(2) / M145).